A 547-amino-acid polypeptide reads, in one-letter code: ATP synthase subunit alpha (547 aa).

Residue 173–180 participates in ATP binding; that stretch reads GDRQTGKT.

The protein belongs to the ATPase alpha/beta chains family. F-type ATPases have 2 components, CF(1) - the catalytic core - and CF(0) - the membrane proton channel. CF(1) has five subunits: alpha(3), beta(3), gamma(1), delta(1), epsilon(1). CF(0) has three main subunits: a(1), b(2) and c(9-12). The alpha and beta chains form an alternating ring which encloses part of the gamma chain. CF(1) is attached to CF(0) by a central stalk formed by the gamma and epsilon chains, while a peripheral stalk is formed by the delta and b chains.

The protein resides in the cell membrane. The catalysed reaction is ATP + H2O + 4 H(+)(in) = ADP + phosphate + 5 H(+)(out). Its function is as follows. Produces ATP from ADP in the presence of a proton gradient across the membrane. The alpha chain is a regulatory subunit. The chain is ATP synthase subunit alpha from Thermobifida fusca (strain YX).